Consider the following 172-residue polypeptide: Exocyst complex component 1-like (172 aa).

This chain is Exocyst complex component 1-like, found in Mus musculus (Mouse).